The following is a 135-amino-acid chain: Holo-[acyl-carrier-protein] synthase (135 aa).

Mg(2+)-binding residues include D8 and E57.

This sequence belongs to the P-Pant transferase superfamily. AcpS family. Mg(2+) is required as a cofactor.

The protein localises to the cytoplasm. The catalysed reaction is apo-[ACP] + CoA = holo-[ACP] + adenosine 3',5'-bisphosphate + H(+). Functionally, transfers the 4'-phosphopantetheine moiety from coenzyme A to a Ser of acyl-carrier-protein. The protein is Holo-[acyl-carrier-protein] synthase of Xanthobacter autotrophicus (strain ATCC BAA-1158 / Py2).